A 364-amino-acid polypeptide reads, in one-letter code: Aminomethyltransferase (364 aa).

The protein belongs to the GcvT family. In terms of assembly, the glycine cleavage system is composed of four proteins: P, T, L and H.

The catalysed reaction is N(6)-[(R)-S(8)-aminomethyldihydrolipoyl]-L-lysyl-[protein] + (6S)-5,6,7,8-tetrahydrofolate = N(6)-[(R)-dihydrolipoyl]-L-lysyl-[protein] + (6R)-5,10-methylene-5,6,7,8-tetrahydrofolate + NH4(+). The glycine cleavage system catalyzes the degradation of glycine. The chain is Aminomethyltransferase from Shigella flexneri.